Consider the following 150-residue polypeptide: 3-dehydroquinate dehydratase (150 aa).

Tyr26 serves as the catalytic Proton acceptor. Asn77, His83, and Asp90 together coordinate substrate. The active-site Proton donor is His103. Residues 104–105 and Arg114 contribute to the substrate site; that span reads LS.

It belongs to the type-II 3-dehydroquinase family. Homododecamer.

It carries out the reaction 3-dehydroquinate = 3-dehydroshikimate + H2O. It participates in metabolic intermediate biosynthesis; chorismate biosynthesis; chorismate from D-erythrose 4-phosphate and phosphoenolpyruvate: step 3/7. In terms of biological role, catalyzes a trans-dehydration via an enolate intermediate. The sequence is that of 3-dehydroquinate dehydratase from Histophilus somni (strain 129Pt) (Haemophilus somnus).